Here is a 522-residue protein sequence, read N- to C-terminus: Leucine-rich repeat transmembrane neuronal protein 1 (522 aa).

An N-terminal signal peptide occupies residues 1-34 (MDFLLLGLCLHWLLRRPSGVVLCLLGACFQMLPA). The LRRNT domain occupies 35–63 (APSGCPGQCRCEGRLLYCEALNLTEAPHN). Residues 35–427 (APSGCPGQCR…HAENAVQIHK (393 aa)) are Extracellular-facing. 2 N-linked (GlcNAc...) asparagine glycosylation sites follow: Asn-56 and Asn-63. LRR repeat units lie at residues 64–87 (LSGL…QFTG), 89–111 (MQLT…AFQK), 112–135 (LRRV…TFRP), 136–159 (MPNL…LFHG), 161–183 (RKLT…IFQD), 184–207 (CRSL…SFAG), 209–231 (FKLT…HFPR), 233–255 (ISLH…LDWV), 256–278 (WNLE…VFET), and 280–302 (PYLQ…ILNS). A glycan (N-linked (GlcNAc...) asparagine) is linked at Asn-130. The LRRCT domain maps to 314 to 365 (NLWDCGRNVCALASWLSNFQGRYDANLQCASPEYAQGEDVLDAVYAFHLCED). Residue Asn-381 is glycosylated (N-linked (GlcNAc...) asparagine). The helical transmembrane segment at 428–448 (VVTGTMALIFSFLIVVLVLYV) threads the bilayer. Over 449-522 (SWKCFPASLR…HQQPARECEV (74 aa)) the chain is Cytoplasmic.

The protein belongs to the LRRTM family. In terms of tissue distribution, expressed predominantly in the nervous system by postmitotic neurons, but also in some non-neuronal tissues. In adult brain expression is most prominent in the forebraain, particularly in the thalamus and in the cortical areas including hippocampus, piriform and posterior cingulate.

It is found in the cell membrane. The protein localises to the postsynaptic cell membrane. Exhibits strong synaptogenic activity, restricted to excitatory presynaptic differentiation, acting at both pre- and postsynaptic level. The polypeptide is Leucine-rich repeat transmembrane neuronal protein 1 (Lrrtm1) (Mus musculus (Mouse)).